The following is a 274-amino-acid chain: 16S rRNA (guanine(1405)-N(7))-methyltransferase (274 aa).

S-adenosyl-L-methionine is bound by residues 102-108 (HISTRER), Ala133, Asp156, 182-183 (DL), Leu198, and Gln207.

It belongs to the methyltransferase superfamily. Aminoglycoside resistance family.

It catalyses the reaction guanosine(1405) in 16S rRNA + S-adenosyl-L-methionine = N(7)-methylguanosine(1405) in 16S rRNA + S-adenosyl-L-homocysteine. Functionally, specifically methylates the N(7) position of guanine 1405 in 16S rRNA. Confers resistance to various aminoglycosides, including gentamicin, kanamycin and sisomicin. The polypeptide is 16S rRNA (guanine(1405)-N(7))-methyltransferase (sgm) (Micromonospora zionensis).